The primary structure comprises 258 residues: D-aminoacyl-tRNA deacylase (258 aa).

It belongs to the DtdA deacylase family. As to quaternary structure, monomer. Requires Zn(2+) as cofactor.

The enzyme catalyses a D-aminoacyl-tRNA + H2O = a tRNA + a D-alpha-amino acid + H(+). It catalyses the reaction glycyl-tRNA(Ala) + H2O = tRNA(Ala) + glycine + H(+). Functionally, D-aminoacyl-tRNA deacylase with broad substrate specificity. By recycling D-aminoacyl-tRNA to D-amino acids and free tRNA molecules, this enzyme counteracts the toxicity associated with the formation of D-aminoacyl-tRNA entities in vivo. This is D-aminoacyl-tRNA deacylase from Cenarchaeum symbiosum (strain A).